We begin with the raw amino-acid sequence, 80 residues long: NAD(P)H-quinone oxidoreductase subunit O (80 aa).

It belongs to the complex I NdhO subunit family. As to quaternary structure, NDH-1 can be composed of about 15 different subunits; different subcomplexes with different compositions have been identified which probably have different functions.

It localises to the cellular thylakoid membrane. The enzyme catalyses a plastoquinone + NADH + (n+1) H(+)(in) = a plastoquinol + NAD(+) + n H(+)(out). It carries out the reaction a plastoquinone + NADPH + (n+1) H(+)(in) = a plastoquinol + NADP(+) + n H(+)(out). Functionally, NDH-1 shuttles electrons from an unknown electron donor, via FMN and iron-sulfur (Fe-S) centers, to quinones in the respiratory and/or the photosynthetic chain. The immediate electron acceptor for the enzyme in this species is believed to be plastoquinone. Couples the redox reaction to proton translocation, and thus conserves the redox energy in a proton gradient. Cyanobacterial NDH-1 also plays a role in inorganic carbon-concentration. This chain is NAD(P)H-quinone oxidoreductase subunit O, found in Prochlorococcus marinus (strain MIT 9515).